The sequence spans 330 residues: MNRESAKQLVLTDRFGRTVDYVRIAVTSACNLRCTYCLKEDAPTQTQQLDVVETSKLIALLAGMGVRKIRFTGGEPLLHPSIPELVRIAKATPGIDTVCITTNGVLLDRQLDALVEAGLDGVNLSLDTLDREKFTSITRRDRFEQVSKALDRLLATPSLTVKLNTLMLRGINNDEIPAFVELTREHDLTVRFMELQPFDDHQIWRTGRFMGAERIRERLADAYPELEAITGHSTEHYSFSLPGHRGSIAIIPAFSRNFCSSCSKLRITADARLISCLYHHESIDLAPALKGEMNEVELKKRIIEAVQQKPKDGLKSSHDTAASSMSQIGG.

In terms of domain architecture, Radical SAM core spans 14-225 (RFGRTVDYVR…RERLADAYPE (212 aa)). Arginine 23 serves as a coordination point for GTP. Residues cysteine 30 and cysteine 34 each coordinate [4Fe-4S] cluster. S-adenosyl-L-methionine is bound at residue tyrosine 36. Cysteine 37 serves as a coordination point for [4Fe-4S] cluster. Arginine 70 is a binding site for GTP. Glycine 74 contacts S-adenosyl-L-methionine. Threonine 101 provides a ligand contact to GTP. Serine 125 is an S-adenosyl-L-methionine binding site. Lysine 162 contacts GTP. Residues cysteine 259 and cysteine 262 each coordinate [4Fe-4S] cluster. 264–266 (KLR) contributes to the GTP binding site. Cysteine 276 is a [4Fe-4S] cluster binding site. Residues 309–318 (KPKDGLKSSH) show a composition bias toward basic and acidic residues. The interval 309–330 (KPKDGLKSSHDTAASSMSQIGG) is disordered. The segment covering 319–330 (DTAASSMSQIGG) has biased composition (polar residues).

This sequence belongs to the radical SAM superfamily. MoaA family. In terms of assembly, monomer and homodimer. [4Fe-4S] cluster is required as a cofactor.

It catalyses the reaction GTP + AH2 + S-adenosyl-L-methionine = (8S)-3',8-cyclo-7,8-dihydroguanosine 5'-triphosphate + 5'-deoxyadenosine + L-methionine + A + H(+). Its pathway is cofactor biosynthesis; molybdopterin biosynthesis. Its function is as follows. Catalyzes the cyclization of GTP to (8S)-3',8-cyclo-7,8-dihydroguanosine 5'-triphosphate. This is GTP 3',8-cyclase from Chlorobaculum tepidum (strain ATCC 49652 / DSM 12025 / NBRC 103806 / TLS) (Chlorobium tepidum).